The primary structure comprises 194 residues: Large ribosomal subunit protein eL15 (194 aa).

Positions 168–194 (RSRGLLNKGKGAEKVRPSIRAHQGKGK) are disordered. Over residues 184–194 (PSIRAHQGKGK) the composition is skewed to basic residues.

Belongs to the eukaryotic ribosomal protein eL15 family. As to quaternary structure, part of the 50S ribosomal subunit.

The chain is Large ribosomal subunit protein eL15 from Thermococcus kodakarensis (strain ATCC BAA-918 / JCM 12380 / KOD1) (Pyrococcus kodakaraensis (strain KOD1)).